The chain runs to 313 residues: Ribonuclease Z (313 aa).

Residues histidine 62, histidine 64, aspartate 66, histidine 67, histidine 142, aspartate 212, and histidine 270 each contribute to the Zn(2+) site. Aspartate 66 functions as the Proton acceptor in the catalytic mechanism.

It belongs to the RNase Z family. Homodimer. Zn(2+) serves as cofactor.

It catalyses the reaction Endonucleolytic cleavage of RNA, removing extra 3' nucleotides from tRNA precursor, generating 3' termini of tRNAs. A 3'-hydroxy group is left at the tRNA terminus and a 5'-phosphoryl group is left at the trailer molecule.. Zinc phosphodiesterase, which displays some tRNA 3'-processing endonuclease activity. Probably involved in tRNA maturation, by removing a 3'-trailer from precursor tRNA. This is Ribonuclease Z from Cytophaga hutchinsonii (strain ATCC 33406 / DSM 1761 / CIP 103989 / NBRC 15051 / NCIMB 9469 / D465).